The sequence spans 37 residues: 24 kDa antigen (37 aa).

The sequence is that of 24 kDa antigen from Plasmodium chabaudi.